Consider the following 258-residue polypeptide: Phosphate import ATP-binding protein PstB (258 aa).

In terms of domain architecture, ABC transporter spans 5–247 (IETKDLDIYY…ERIFSNPKEK (243 aa)). 37–44 (GPSGCGKS) lines the ATP pocket.

This sequence belongs to the ABC transporter superfamily. Phosphate importer (TC 3.A.1.7) family. As to quaternary structure, the complex is composed of two ATP-binding proteins (PstB), two transmembrane proteins (PstC and PstA) and a solute-binding protein (PstS).

The protein localises to the cell membrane. The enzyme catalyses phosphate(out) + ATP + H2O = ADP + 2 phosphate(in) + H(+). Its function is as follows. Part of the ABC transporter complex PstSACB involved in phosphate import. Responsible for energy coupling to the transport system. The chain is Phosphate import ATP-binding protein PstB from Cutibacterium acnes (strain DSM 16379 / KPA171202) (Propionibacterium acnes).